Reading from the N-terminus, the 446-residue chain is Amino-acid acetyltransferase (446 aa).

An N-acetyltransferase domain is found at 299–431; it reads EQVRDAEIDD…SHLPMKKQKL (133 aa).

Belongs to the acetyltransferase family. ArgA subfamily.

It is found in the cytoplasm. The catalysed reaction is L-glutamate + acetyl-CoA = N-acetyl-L-glutamate + CoA + H(+). It functions in the pathway amino-acid biosynthesis; L-arginine biosynthesis; N(2)-acetyl-L-ornithine from L-glutamate: step 1/4. This chain is Amino-acid acetyltransferase, found in Aliivibrio fischeri (strain MJ11) (Vibrio fischeri).